A 545-amino-acid chain; its full sequence is Methionine--tRNA ligase (545 aa).

The 'HIGH' region signature appears at 13–23 (PYANGEIHLGH). Positions 144, 147, 157, and 160 each coordinate Zn(2+). The 'KMSKS' region signature appears at 329–333 (KMSKS). Lys-332 contacts ATP.

This sequence belongs to the class-I aminoacyl-tRNA synthetase family. MetG type 1 subfamily. As to quaternary structure, monomer. It depends on Zn(2+) as a cofactor.

It localises to the cytoplasm. It carries out the reaction tRNA(Met) + L-methionine + ATP = L-methionyl-tRNA(Met) + AMP + diphosphate. In terms of biological role, is required not only for elongation of protein synthesis but also for the initiation of all mRNA translation through initiator tRNA(fMet) aminoacylation. The chain is Methionine--tRNA ligase from Vesicomyosocius okutanii subsp. Calyptogena okutanii (strain HA).